Consider the following 245-residue polypeptide: NAD-dependent protein deacylase (245 aa).

The 237-residue stretch at 1 to 237 (MNFPYRNIVV…PKLVEELLAH (237 aa)) folds into the Deacetylase sirtuin-type domain. 13–32 (GAGISAESGIQTFRAQDGLW) provides a ligand contact to NAD(+). Residues Y57 and R60 each contribute to the substrate site. 94 to 97 (QNID) provides a ligand contact to NAD(+). The active-site Proton acceptor is the H112. Zn(2+)-binding residues include C120 and C139. Residues 179–181 (GTS), 205–207 (NLE), and A223 each bind NAD(+).

It belongs to the sirtuin family. Class III subfamily. Requires Zn(2+) as cofactor.

It is found in the cytoplasm. The enzyme catalyses N(6)-acetyl-L-lysyl-[protein] + NAD(+) + H2O = 2''-O-acetyl-ADP-D-ribose + nicotinamide + L-lysyl-[protein]. The catalysed reaction is N(6)-succinyl-L-lysyl-[protein] + NAD(+) + H2O = 2''-O-succinyl-ADP-D-ribose + nicotinamide + L-lysyl-[protein]. Its function is as follows. NAD-dependent lysine deacetylase and desuccinylase that specifically removes acetyl and succinyl groups on target proteins. Modulates the activities of several proteins which are inactive in their acylated form. The chain is NAD-dependent protein deacylase from Vibrio vulnificus (strain YJ016).